The sequence spans 267 residues: Phosphate import ATP-binding protein PstB (267 aa).

An ABC transporter domain is found at 21–262 (IAIRNLEFYY…PSKQQTEDYI (242 aa)). 53–60 (GPSGCGKS) contacts ATP.

It belongs to the ABC transporter superfamily. Phosphate importer (TC 3.A.1.7) family. In terms of assembly, the complex is composed of two ATP-binding proteins (PstB), two transmembrane proteins (PstC and PstA) and a solute-binding protein (PstS).

The protein localises to the cell inner membrane. The catalysed reaction is phosphate(out) + ATP + H2O = ADP + 2 phosphate(in) + H(+). Functionally, part of the ABC transporter complex PstSACB involved in phosphate import. Responsible for energy coupling to the transport system. The chain is Phosphate import ATP-binding protein PstB from Xylella fastidiosa (strain 9a5c).